Reading from the N-terminus, the 427-residue chain is Serine hydroxymethyltransferase (427 aa).

(6S)-5,6,7,8-tetrahydrofolate-binding positions include L127 and 131–133 (GHL). K236 carries the post-translational modification N6-(pyridoxal phosphate)lysine.

This sequence belongs to the SHMT family. In terms of assembly, homodimer. Pyridoxal 5'-phosphate is required as a cofactor.

It is found in the cytoplasm. The enzyme catalyses (6R)-5,10-methylene-5,6,7,8-tetrahydrofolate + glycine + H2O = (6S)-5,6,7,8-tetrahydrofolate + L-serine. It participates in one-carbon metabolism; tetrahydrofolate interconversion. It functions in the pathway amino-acid biosynthesis; glycine biosynthesis; glycine from L-serine: step 1/1. Its function is as follows. Catalyzes the reversible interconversion of serine and glycine with tetrahydrofolate (THF) serving as the one-carbon carrier. This reaction serves as the major source of one-carbon groups required for the biosynthesis of purines, thymidylate, methionine, and other important biomolecules. Also exhibits THF-independent aldolase activity toward beta-hydroxyamino acids, producing glycine and aldehydes, via a retro-aldol mechanism. This is Serine hydroxymethyltransferase from Paramagnetospirillum magneticum (strain ATCC 700264 / AMB-1) (Magnetospirillum magneticum).